The following is a 452-amino-acid chain: Chromosomal replication initiator protein DnaA (452 aa).

Residues 1-73 (MSPNSTLWQT…NELATKYSST (73 aa)) form a domain I, interacts with DnaA modulators region. The segment at 73–102 (TPVRLKFVSQEEVIEEPVADRKLTIDYRQG) is domain II. Residues 103–323 (NLNSTYTFDS…GALIRLISYA (221 aa)) form a domain III, AAA+ region region. Positions 147, 149, 150, and 151 each coordinate ATP. The domain IV, binds dsDNA stretch occupies residues 324–452 (QTFNLEITMN…VKKIDSPLLK (129 aa)).

Belongs to the DnaA family. In terms of assembly, oligomerizes as a right-handed, spiral filament on DNA at oriC.

The protein localises to the cytoplasm. Functionally, plays an essential role in the initiation and regulation of chromosomal replication. ATP-DnaA binds to the origin of replication (oriC) to initiate formation of the DNA replication initiation complex once per cell cycle. Binds the DnaA box (a 9 base pair repeat at the origin) and separates the double-stranded (ds)DNA. Forms a right-handed helical filament on oriC DNA; dsDNA binds to the exterior of the filament while single-stranded (ss)DNA is stabiized in the filament's interior. The ATP-DnaA-oriC complex binds and stabilizes one strand of the AT-rich DNA unwinding element (DUE), permitting loading of DNA polymerase. After initiation quickly degrades to an ADP-DnaA complex that is not apt for DNA replication. Binds acidic phospholipids. The polypeptide is Chromosomal replication initiator protein DnaA (Acholeplasma laidlawii (strain PG-8A)).